The sequence spans 672 residues: Segment polarity protein dishevelled homolog mig-5 (672 aa).

The DIX domain maps to 9-91 (CSQIKVFYYL…GFYEIFLVST (83 aa)). 3 disordered regions span residues 97 to 127 (LPRN…ATPY), 150 to 174 (YTSN…SSLY), and 187 to 215 (DDDR…ATES). Positions 98–108 (PRNSGTMTRPQ) are enriched in polar residues. The span at 160–169 (YDEHTRRTGD) shows a compositional bias: basic and acidic residues. A compositionally biased stretch (basic residues) spans 191–202 (RRKKQKKERFRR). The 69-residue stretch at 226-294 (EIYLPMKNVP…PQAVRSLREA (69 aa)) folds into the PDZ domain. Residues 427–501 (PDSGLAVKNR…TEKCYYVFGD (75 aa)) form the DEP domain. The disordered stretch occupies residues 604-672 (KNNHRQVPAP…SNSRTRILRT (69 aa)). The segment covering 660–672 (ENSSNSRTRILRT) has biased composition (polar residues).

Belongs to the DSH family.

The protein resides in the cytoplasm. It localises to the cell cortex. It is found in the cell membrane. Its subcellular location is the cell junction. Functionally, plays a role in the signal transduction pathways mediated by multiple Wnt genes. Functions redundantly with other dishevelled family members throughout development. During embryonic and larval development, controls cell migration and/or cell fate specification of hypodermal cells, hypodermal seam cells, vulval precursor cells and, through distal tip cell migration, somatic gonad precursor cells. In early embryos, regulates the orientation of the mitotic spindle of blastomeres and specifically, along with dsh-2, is required for the correct mitotic spindle orientation of the ABar blastomere division plane. Controls the polarity and the asymmetric localization of downstream components of the wnt/beta-catenin asymmetry pathway, and in particular, controls the asymmetric localization of the wnt receptor lin-17/Frizzled in ectodermal blast B cells. May act redundantly with dsh-2 to regulate the expression and nuclear localization of the beta-catenin homolog wrm-2, but alone seems to be required for the polarity of wrm-2 during the asymmetric cell division of hypodermal seam cells. Also, maintains the polarity and migration of QL neuroblasts in larvae. During the embryonic development of touch receptor neurons, may act redundantly with dsh-1, downstream of wnt signaling ligands and the wnt receptor lin-17/Frizzled, to direct the growth of neurites of touch receptor neurons towards the anterior of the body of the worm and towards the PLM touch receptor neuron and other tail neurons. May play a role in the guidance of posterior D-type motor neuron axons along the anteroposterior axis. The sequence is that of Segment polarity protein dishevelled homolog mig-5 from Caenorhabditis elegans.